Consider the following 86-residue polypeptide: Toxin Td8 (86 aa).

The N-terminal stretch at 1-20 is a signal peptide; that stretch reads MTRFVLFLSCFFLIGMVVEC. The LCN-type CS-alpha/beta domain maps to 21–83; that stretch reads KDGYLVGDDG…IWNSATNRCR (63 aa). Intrachain disulfides connect C31/C82, C35/C57, C43/C63, and C47/C65. R83 is subject to Arginine amide.

Expressed by the venom gland.

The protein resides in the secreted. Beta toxins bind voltage-independently at site-4 of sodium channels (Nav) and shift the voltage of activation toward more negative potentials thereby affecting sodium channel activation and promoting spontaneous and repetitive firing. This is Toxin Td8 from Tityus discrepans (Venezuelan scorpion).